Here is a 525-residue protein sequence, read N- to C-terminus: uncharacterized protein (525 aa).

The first 21 residues, 1 to 21, serve as a signal peptide directing secretion; sequence MLECLSALLVLFAGGGGSVLA. The Extracellular segment spans residues 22–448; it reads AVQSKTVADP…ISAASQLDKR (427 aa). Residues 242–264 form a disordered region; that stretch reads KVSSENCSKDTDDKSGSKKERNT. A helical transmembrane segment spans residues 449–469; sequence IFIFTAITVSITTLMMLGFSY. The Cytoplasmic portion of the chain corresponds to 470 to 525; sequence RSRVSFRDHSIDDSDDDNDWSDDEVEFDEEYFYSLPVSIPEKGISLDKMAQQLGVE.

It is found in the membrane. This is an uncharacterized protein from Saccharomyces cerevisiae (strain YJM789) (Baker's yeast).